Consider the following 425-residue polypeptide: Nicotinate dehydrogenase large molybdopterin subunit (425 aa).

Se-Mo-molybdopterin cytosine dinucleotide is bound by residues glutamine 208 and 238–240; that span reads GFG.

The protein belongs to the xanthine dehydrogenase family. As to quaternary structure, heterooctamer of NDHM, NDHL, NDHS and NDHF. Dimer of heterotetramers. Se-Mo-molybdopterin cytosine dinucleotide is required as a cofactor.

The catalysed reaction is nicotinate + NADP(+) + H2O = 6-hydroxynicotinate + NADPH + H(+). The protein operates within cofactor degradation; nicotinate degradation; 6-hydroxynicotinate from nicotinate: step 1/1. With respect to regulation, reversibly inactivated by selenide and sulfide. Not inhibited by cyanide. Functionally, catalyzes the hydroxylation of nicotinate to 6-hydroxynicotinate. Also active against 2-pyrazinecarboxylic acid, but inactive against other nicotinate analogs. The chain is Nicotinate dehydrogenase large molybdopterin subunit (ndhL) from Eubacterium barkeri (Clostridium barkeri).